A 403-amino-acid polypeptide reads, in one-letter code: Serine/threonine transporter SstT (403 aa).

A run of 9 helical transmembrane segments spans residues valine 14–isoleucine 34, valine 44–serine 64, isoleucine 79–methionine 99, alanine 138–leucine 158, glycine 175–valine 195, leucine 214–phenylalanine 234, methionine 295–isoleucine 315, valine 327–isoleucine 347, and leucine 353–valine 373.

This sequence belongs to the dicarboxylate/amino acid:cation symporter (DAACS) (TC 2.A.23) family.

It is found in the cell inner membrane. The catalysed reaction is L-serine(in) + Na(+)(in) = L-serine(out) + Na(+)(out). It catalyses the reaction L-threonine(in) + Na(+)(in) = L-threonine(out) + Na(+)(out). In terms of biological role, involved in the import of serine and threonine into the cell, with the concomitant import of sodium (symport system). This chain is Serine/threonine transporter SstT, found in Pseudomonas putida (strain ATCC 700007 / DSM 6899 / JCM 31910 / BCRC 17059 / LMG 24140 / F1).